Here is a 359-residue protein sequence, read N- to C-terminus: Quinolinate synthase (359 aa).

Iminosuccinate contacts are provided by His81 and Ser99. Cys144 is a [4Fe-4S] cluster binding site. Iminosuccinate contacts are provided by residues Tyr170–Asn172 and Ser187. Cys229 contributes to the [4Fe-4S] cluster binding site. Iminosuccinate is bound by residues His255 to Glu257 and Thr272. Cys315 contributes to the [4Fe-4S] cluster binding site.

The protein belongs to the quinolinate synthase family. Type 2 subfamily. [4Fe-4S] cluster serves as cofactor.

The protein resides in the cytoplasm. The catalysed reaction is iminosuccinate + dihydroxyacetone phosphate = quinolinate + phosphate + 2 H2O + H(+). The protein operates within cofactor biosynthesis; NAD(+) biosynthesis; quinolinate from iminoaspartate: step 1/1. In terms of biological role, catalyzes the condensation of iminoaspartate with dihydroxyacetone phosphate to form quinolinate. In Sinorhizobium medicae (strain WSM419) (Ensifer medicae), this protein is Quinolinate synthase.